Consider the following 274-residue polypeptide: MQQLQNIIETAFERRAEITPANADTVTREAVNQVIALLDSGALRVAEKIDGQWVTHQWLKKAVLLSFRINDNQVIEGAESRYFDKVPMKFADYDEARFQKEGFRVVPPAAVRQGAFIARNTVLMPSYVNIGAYVDEGTMVDTWATVGSCAQIGKNVHLSGGVGIGGVLEPLQANPTIIEDNCFIGARSEIVEGVIVEEGSVISMGVYIGQSTKIYDRETGEVHYGRVPAGSVVVSGNLPSKDGKYSLYCAVIVKKVDAKTRGKVGINELLRTID.

It belongs to the transferase hexapeptide repeat family.

The protein localises to the cytoplasm. It carries out the reaction (S)-2,3,4,5-tetrahydrodipicolinate + succinyl-CoA + H2O = (S)-2-succinylamino-6-oxoheptanedioate + CoA. Its pathway is amino-acid biosynthesis; L-lysine biosynthesis via DAP pathway; LL-2,6-diaminopimelate from (S)-tetrahydrodipicolinate (succinylase route): step 1/3. The protein is 2,3,4,5-tetrahydropyridine-2,6-dicarboxylate N-succinyltransferase of Escherichia fergusonii (strain ATCC 35469 / DSM 13698 / CCUG 18766 / IAM 14443 / JCM 21226 / LMG 7866 / NBRC 102419 / NCTC 12128 / CDC 0568-73).